Reading from the N-terminus, the 837-residue chain is Striatin-interacting protein 1 (837 aa).

Position 1 is an N-acetylmethionine (Met1). Disordered regions lie at residues 1–67 and 333–423; these read MEPA…ESPD and AASP…KGLP. A compositionally biased stretch (pro residues) spans 18-35; that stretch reads PQPPPPPPPATAQPPPGA. Positions 36-46 are enriched in low complexity; sequence PRAAAGLLPGG. The segment covering 47–60 has biased composition (basic and acidic residues); it reads KAREFNRNQRKDSE. Phosphoserine occurs at positions 59, 335, and 339. Residues 333 to 343 show a composition bias toward low complexity; sequence AASPPASASDS. The segment covering 356–377 has biased composition (basic and acidic residues); sequence KALIKQDNLDAFNERDPYKADD. A compositionally biased stretch (acidic residues) spans 378-391; that stretch reads SREEEEENDDDNSL. The residue at position 788 (Ser788) is a Phosphoserine. A required for STRIPAK core complex formation region spans residues 796–837; sequence DNCLQSVLGQRVDLPEDFQMNYDLWLEREVFSKPISWEELLQ.

The protein belongs to the STRIP family. Part of the core of STRIPAK complexes composed of PP2A catalytic and scaffolding subunits, the striatins (PP2A regulatory subunits), the striatin-associated proteins MOB4, STRIP1 and STRIP2, PDCD10 and members of the STE20 kinases, such as STK24 and STK26. The STRIPAK complex can be extended by adapter proteins such as SLMAP:SIKE1, CTTNBP2 or CTTNBP2NL. Interacts with CDC42BPB. Interacts with CTTNBP2NL.

It localises to the cytoplasm. Functionally, plays a role in the regulation of cell morphology and cytoskeletal organization. Required in the cortical actin filament dynamics and cell shape. Part of the striatin-interacting phosphatase and kinase (STRIPAK) complexes. STRIPAK complexes have critical roles in protein (de)phosphorylation and are regulators of multiple signaling pathways including Hippo, MAPK, nuclear receptor and cytoskeleton remodeling. Different types of STRIPAK complexes are involved in a variety of biological processes such as cell growth, differentiation, apoptosis, metabolism and immune regulation. The chain is Striatin-interacting protein 1 (STRIP1) from Pongo abelii (Sumatran orangutan).